Reading from the N-terminus, the 383-residue chain is Seipin (383 aa).

Over 1-27 (MVNDPPVPALLWAQEVGHVLAGRARRL) the chain is Cytoplasmic. A helical membrane pass occupies residues 28–48 (MLQFGVLFCTILLLLWVSVFL). Residues 49 to 242 (YGSFYYSYMP…TCAFVGVASN (194 aa)) lie on the Lumenal side of the membrane. 2 N-linked (GlcNAc...) asparagine glycosylation sites follow: N88 and N242. A helical transmembrane segment spans residues 243–263 (FTFLSVIVLFSYMQWVWGAVW). At 264–383 (PRHRFSLQVN…LRQRPTCSSS (120 aa)) the chain is on the cytoplasmic side. Positions 279–383 (NSHHGAPRRI…LRQRPTCSSS (105 aa)) are disordered. S289 carries the post-translational modification Phosphoserine. The span at 292–302 (QPGQESTQQSD) shows a compositional bias: polar residues. The span at 322-332 (EEEKPEKRPLN) shows a compositional bias: basic and acidic residues. A phosphoserine mark is found at S342 and S345. The segment covering 353–371 (TEANPPTSASASALAPETL) has biased composition (low complexity).

It belongs to the seipin family. Undecamer (an oligomer having eleven subunits). Oligomerization is important for its function in lipid droplet formation. Interacts with LDAF1 to form an oligomeric complex. Interacts with RAB18. Interacts with ZFYVE1 in a RAB18-dependent manner. Expressed in the paraventricular nucleus of the hypothalamus (PVN) and brainstem dorsal vagal complex (DVC) in oxytocin and catecholaminergic neurons (at protein level). Highest expression detected in subcutaneous and epididymal white adipose tissue, brown adipose tissue and testis. Also expressed in brain, skeletal muscle and adrenal gland, with lower levels detected in liver, heart, kidney, spleen, lung and small intestine. In brain, detected in piriform cortex, olfactory tubercle, islands of Calleja, lateral septal nucleus, medial septal nucleus, nucleus of the vertical limb of the diagonal band, nucleus of the horizontal limb of the diagonal band, preoptic area, paraventricular thalamic nucleus, lateral globus pallidus, supraoptic nucleus, suprachiasmatic nucleus, subfornical organ, paraventricular nucleus of the hypothalamus, zona incerta, dorsomedial nucleus of the hypothalamus, ventromedial nucleus of the hypothalamus, arcuate nucleus of the hypothalamus, basomedial amygdaloid nucleus, medial amygdaloid nucleus, medial habenular, pyramidal cell layer of the hippocampus, granular layer of the dentate gyrus, posterior hypothalamus, supramammilliary nucleus, premammillary nucleus, nucleus of Darkschewitsch, Edinger-Westphal nucleus, ventral tegmental area, dorsal raphe nucleus, periaqueductal gray, median raphe nucleus, lateral parabrachial nucleus, dorsal tegmental nucleus, laterodorsal tegmental nucleus, locus coeruleus, Barrington's nucleus, medial vestibular nucleus, ambiguous nucleus, dorsal vagal complex and hypoglossal nucleus.

The protein localises to the endoplasmic reticulum membrane. It localises to the lipid droplet. In terms of biological role, plays a crucial role in the formation of lipid droplets (LDs) which are storage organelles at the center of lipid and energy homeostasis. In association with LDAF1, defines the sites of LD formation in the ER. Also required for growth and maturation of small nascent LDs into larger mature LDs. Mediates the formation and/or stabilization of endoplasmic reticulum-lipid droplets (ER-LD) contacts, facilitating protein and lipid delivery from the ER into growing LDs. Regulates the maturation of ZFYVE1-positive nascent LDs and the function of the RAB18-ZFYVE1 complex in mediating the formation of ER-LD contacts. Binds anionic phospholipids including phosphatidic acid. Plays an important role in the differentiation and development of adipocytes. This chain is Seipin, found in Mus musculus (Mouse).